Reading from the N-terminus, the 462-residue chain is beta-Tubulin at 65B (462 aa).

Positions 70, 137, 141, 142, 143, 203, and 225 each coordinate GTP. Glu70 provides a ligand contact to Mg(2+). The interval 420–462 is disordered; the sequence is DYRSSAEGEDSGGGGGGGGGRSGSAESGEEEATPEAHCQYCTE. Positions 430-441 are enriched in gly residues; sequence SGGGGGGGGGRS.

The protein belongs to the tubulin family. As to quaternary structure, dimer of alpha and beta chains. A typical microtubule is a hollow water-filled tube with an outer diameter of 25 nm and an inner diameter of 15 nM. Alpha-beta heterodimers associate head-to-tail to form protofilaments running lengthwise along the microtubule wall with the beta-tubulin subunit facing the microtubule plus end conferring a structural polarity. Microtubules usually have 13 protofilaments but different protofilament numbers can be found in some organisms and specialized cells. Mg(2+) is required as a cofactor.

The protein resides in the cytoplasm. It localises to the cytoskeleton. Functionally, tubulin is the major constituent of microtubules, a cylinder consisting of laterally associated linear protofilaments composed of alpha- and beta-tubulin heterodimers. Microtubules grow by the addition of GTP-tubulin dimers to the microtubule end, where a stabilizing cap forms. Below the cap, tubulin dimers are in GDP-bound state, owing to GTPase activity of alpha-tubulin. This chain is beta-Tubulin at 65B, found in Drosophila melanogaster (Fruit fly).